The following is a 140-amino-acid chain: Nucleoside diphosphate kinase (140 aa).

ATP contacts are provided by lysine 11, phenylalanine 59, arginine 87, threonine 93, arginine 104, and asparagine 114. The active-site Pros-phosphohistidine intermediate is the histidine 117.

Belongs to the NDK family. Homotetramer. Mg(2+) serves as cofactor.

It is found in the cytoplasm. It carries out the reaction a 2'-deoxyribonucleoside 5'-diphosphate + ATP = a 2'-deoxyribonucleoside 5'-triphosphate + ADP. The enzyme catalyses a ribonucleoside 5'-diphosphate + ATP = a ribonucleoside 5'-triphosphate + ADP. Its function is as follows. Major role in the synthesis of nucleoside triphosphates other than ATP. The ATP gamma phosphate is transferred to the NDP beta phosphate via a ping-pong mechanism, using a phosphorylated active-site intermediate. This chain is Nucleoside diphosphate kinase, found in Rickettsia akari (strain Hartford).